We begin with the raw amino-acid sequence, 414 residues long: tRNA N6-adenosine threonylcarbamoyltransferase, mitochondrial (414 aa).

Residues 1 to 29 (MLMLSKTAGAIPRPPRSNVRGFIRRFNVQ) constitute a mitochondrion transit peptide. N6-acetyllysine is present on residues Lys-74 and Lys-140. The a divalent metal cation site is built by His-147 and His-151. Substrate is bound by residues 169-173 (LISGG) and Asp-202. Position 203 is an N6-acetyllysine (Lys-203). Positions 222 and 226 each coordinate substrate. Lys-230 and Lys-299 each carry N6-acetyllysine. Substrate-binding positions include 329 to 330 (SN) and Thr-357. Asp-358 contributes to the a divalent metal cation binding site.

The protein belongs to the KAE1 / TsaD family. As to quaternary structure, monomer. A divalent metal cation is required as a cofactor.

It localises to the mitochondrion. It carries out the reaction L-threonylcarbamoyladenylate + adenosine(37) in tRNA = N(6)-L-threonylcarbamoyladenosine(37) in tRNA + AMP + H(+). Functionally, required for the formation of a threonylcarbamoyl group on adenosine at position 37 (t(6)A37) in mitochondrial tRNAs that read codons beginning with adenine. Probably involved in the transfer of the threonylcarbamoyl moiety of threonylcarbamoyl-AMP (TC-AMP) to the N6 group of A37. Involved in mitochondrial genome maintenance. This is tRNA N6-adenosine threonylcarbamoyltransferase, mitochondrial from Rattus norvegicus (Rat).